The primary structure comprises 285 residues: Octanoyltransferase (285 aa).

The BPL/LPL catalytic domain occupies Leu-50–Ile-277. Substrate-binding positions include Arg-89–His-96, Ser-189–Gly-191, and Gly-202–Ala-204. Cys-220 (acyl-thioester intermediate) is an active-site residue.

The protein belongs to the LipB family.

It is found in the cytoplasm. The catalysed reaction is octanoyl-[ACP] + L-lysyl-[protein] = N(6)-octanoyl-L-lysyl-[protein] + holo-[ACP] + H(+). Its pathway is protein modification; protein lipoylation via endogenous pathway; protein N(6)-(lipoyl)lysine from octanoyl-[acyl-carrier-protein]: step 1/2. Functionally, catalyzes the transfer of endogenously produced octanoic acid from octanoyl-acyl-carrier-protein onto the lipoyl domains of lipoate-dependent enzymes. Lipoyl-ACP can also act as a substrate although octanoyl-ACP is likely to be the physiological substrate. In Psychrobacter cryohalolentis (strain ATCC BAA-1226 / DSM 17306 / VKM B-2378 / K5), this protein is Octanoyltransferase.